We begin with the raw amino-acid sequence, 388 residues long: (S)-8-oxocitronellyl enol synthase ISY1 (388 aa).

NADP(+)-binding positions include 35-37, 63-64, 81-82, 105-106, and Gln-143; these read TGI, RR, DV, and TW. Catalysis depends on residues Lys-147 and Tyr-178. NADP(+) contacts are provided by residues Tyr-178, Ile-205, and 212 to 214; that span reads SMM.

Belongs to the short-chain dehydrogenases/reductases (SDR) family.

It catalyses the reaction (S)-8-oxocitronellyl enol + NADP(+) = (6E)-8-oxogeranial + NADPH + H(+). The enzyme catalyses (S)-8-oxocitronellyl enol + NAD(+) = (6E)-8-oxogeranial + NADH + H(+). Iridoid synthase that catalyzes the first step in generation of the iridoid ring scaffold using the linear monoterpene (6E)-8-oxogeranial as substrate. Iridoids comprise a large family of distinctive bicyclic monoterpenes that possess a wide range of pharmacological activities, including anticancer, anti-inflammatory, antifungal and antibacterial activities. Catalyzes the conversion of the linear monoterpene (6E)-8-oxogeranial to (S)-8-oxocitronellyl enol, a precursor of nepetalactones, which are metabolites that are both insect-repellent and have euphoric effect in cats. The sequence is that of (S)-8-oxocitronellyl enol synthase ISY1 from Nepeta cataria (Catnip).